Consider the following 396-residue polypeptide: Elongation factor Tu (396 aa).

The tr-type G domain occupies 10–206 (KPHVNVGTIG…ALDSYIPEPE (197 aa)). The segment at 19–26 (GHVDHGKT) is G1. 19–26 (GHVDHGKT) provides a ligand contact to GTP. Mg(2+) is bound at residue Thr26. Positions 60–64 (GITIN) are G2. The G3 stretch occupies residues 81–84 (DCPG). GTP-binding positions include 81-85 (DCPGH) and 136-139 (NKCD). The G4 stretch occupies residues 136–139 (NKCD). The tract at residues 174–176 (SAL) is G5.

The protein belongs to the TRAFAC class translation factor GTPase superfamily. Classic translation factor GTPase family. EF-Tu/EF-1A subfamily. As to quaternary structure, monomer.

It localises to the cytoplasm. The catalysed reaction is GTP + H2O = GDP + phosphate + H(+). Functionally, GTP hydrolase that promotes the GTP-dependent binding of aminoacyl-tRNA to the A-site of ribosomes during protein biosynthesis. The sequence is that of Elongation factor Tu from Acinetobacter baumannii (strain ATCC 17978 / DSM 105126 / CIP 53.77 / LMG 1025 / NCDC KC755 / 5377).